We begin with the raw amino-acid sequence, 229 residues long: Ribonuclease 3 (229 aa).

Residues 5–127 enclose the RNase III domain; the sequence is LAGLERKLGY…LIGAIYLDAD (123 aa). Residue E40 coordinates Mg(2+). D44 is an active-site residue. Positions 113 and 116 each coordinate Mg(2+). Residue E116 is part of the active site. The 71-residue stretch at 154-224 folds into the DRBM domain; that stretch reads DPKTRLQEFL…AASALIALGV (71 aa).

This sequence belongs to the ribonuclease III family. As to quaternary structure, homodimer. Mg(2+) is required as a cofactor.

The protein localises to the cytoplasm. It carries out the reaction Endonucleolytic cleavage to 5'-phosphomonoester.. Its function is as follows. Digests double-stranded RNA. Involved in the processing of primary rRNA transcript to yield the immediate precursors to the large and small rRNAs (23S and 16S). Processes some mRNAs, and tRNAs when they are encoded in the rRNA operon. Processes pre-crRNA and tracrRNA of type II CRISPR loci if present in the organism. This Pseudomonas putida (strain ATCC 700007 / DSM 6899 / JCM 31910 / BCRC 17059 / LMG 24140 / F1) protein is Ribonuclease 3.